A 116-amino-acid polypeptide reads, in one-letter code: Holo-[acyl-carrier-protein] synthase (116 aa).

Residues aspartate 8 and glutamate 59 each coordinate Mg(2+).

Belongs to the P-Pant transferase superfamily. AcpS family. Mg(2+) is required as a cofactor.

The protein localises to the cytoplasm. The catalysed reaction is apo-[ACP] + CoA = holo-[ACP] + adenosine 3',5'-bisphosphate + H(+). In terms of biological role, transfers the 4'-phosphopantetheine moiety from coenzyme A to a Ser of acyl-carrier-protein. The polypeptide is Holo-[acyl-carrier-protein] synthase (Staphylococcus saprophyticus subsp. saprophyticus (strain ATCC 15305 / DSM 20229 / NCIMB 8711 / NCTC 7292 / S-41)).